Reading from the N-terminus, the 146-residue chain is Large ribosomal subunit protein eL32 (146 aa).

It belongs to the eukaryotic ribosomal protein eL32 family.

In Methanocaldococcus jannaschii (strain ATCC 43067 / DSM 2661 / JAL-1 / JCM 10045 / NBRC 100440) (Methanococcus jannaschii), this protein is Large ribosomal subunit protein eL32 (rpl32e).